The sequence spans 73 residues: Large ribosomal subunit protein bL31 (73 aa).

Belongs to the bacterial ribosomal protein bL31 family. Type A subfamily. As to quaternary structure, part of the 50S ribosomal subunit.

In terms of biological role, binds the 23S rRNA. The sequence is that of Large ribosomal subunit protein bL31 from Dinoroseobacter shibae (strain DSM 16493 / NCIMB 14021 / DFL 12).